The sequence spans 205 residues: Small ribosomal subunit protein uS4B (205 aa).

The S4 RNA-binding domain maps to Arg-94 to Leu-157.

The protein belongs to the universal ribosomal protein uS4 family. Part of the 30S ribosomal subunit. Contacts protein S5. The interaction surface between S4 and S5 is involved in control of translational fidelity.

Functionally, one of the primary rRNA binding proteins, it binds directly to 16S rRNA where it nucleates assembly of the body of the 30S subunit. Its function is as follows. With S5 and S12 plays an important role in translational accuracy. The polypeptide is Small ribosomal subunit protein uS4B (Nitrosomonas europaea (strain ATCC 19718 / CIP 103999 / KCTC 2705 / NBRC 14298)).